Reading from the N-terminus, the 40-residue chain is Photosystem II reaction center protein J (40 aa).

Residues 8–28 form a helical membrane-spanning segment; the sequence is IPLWIIGTVAGILVIGLIGIF.

The protein belongs to the PsbJ family. In terms of assembly, PSII is composed of 1 copy each of membrane proteins PsbA, PsbB, PsbC, PsbD, PsbE, PsbF, PsbH, PsbI, PsbJ, PsbK, PsbL, PsbM, PsbT, PsbX, PsbY, PsbZ, Psb30/Ycf12, at least 3 peripheral proteins of the oxygen-evolving complex and a large number of cofactors. It forms dimeric complexes.

It is found in the plastid. It localises to the chloroplast thylakoid membrane. One of the components of the core complex of photosystem II (PSII). PSII is a light-driven water:plastoquinone oxidoreductase that uses light energy to abstract electrons from H(2)O, generating O(2) and a proton gradient subsequently used for ATP formation. It consists of a core antenna complex that captures photons, and an electron transfer chain that converts photonic excitation into a charge separation. The sequence is that of Photosystem II reaction center protein J from Oenothera elata subsp. hookeri (Hooker's evening primrose).